Reading from the N-terminus, the 331-residue chain is DNA fragmentation factor subunit alpha (331 aa).

At Met1 the chain carries N-acetylmethionine. In terms of domain architecture, CIDE-N spans 17 to 96 (TLKPCLLRRN…ALASNEKWAY (80 aa)). Thr243 carries the phosphothreonine modification. The segment at 305 to 331 (SLRSISASKASPPGDLQNPKRARQDPT) is disordered. Ser315 carries the phosphoserine modification.

Heterodimer of DFFA and DFFB. In terms of processing, caspase-3 cleaves DFF45 at 2 sites to generate an active factor.

It localises to the cytoplasm. Inhibitor of the caspase-activated DNase (DFF40). In Homo sapiens (Human), this protein is DNA fragmentation factor subunit alpha (DFFA).